Reading from the N-terminus, the 105-residue chain is Large ribosomal subunit protein uL24 (105 aa).

It belongs to the universal ribosomal protein uL24 family. Part of the 50S ribosomal subunit.

One of two assembly initiator proteins, it binds directly to the 5'-end of the 23S rRNA, where it nucleates assembly of the 50S subunit. Its function is as follows. One of the proteins that surrounds the polypeptide exit tunnel on the outside of the subunit. The protein is Large ribosomal subunit protein uL24 of Methylobacillus flagellatus (strain ATCC 51484 / DSM 6875 / VKM B-1610 / KT).